Consider the following 87-residue polypeptide: U3-theraphotoxin-Hhn1m (87 aa).

Residues 1 to 24 (MVNMKASMFLTFAGLVLLFVVCYA) form the signal peptide. Residues 25–52 (SESEEKEFPKEMLSSIFAVDNDFKQEER) constitute a propeptide that is removed on maturation. Cystine bridges form between cysteine 54–cysteine 67, cysteine 61–cysteine 72, and cysteine 66–cysteine 79.

The protein belongs to the neurotoxin 10 (Hwtx-1) family. 51 (Hntx-8) subfamily. Hntx-8 sub-subfamily. As to expression, expressed by the venom gland.

The protein resides in the secreted. In terms of biological role, ion channel inhibitor. The polypeptide is U3-theraphotoxin-Hhn1m (Cyriopagopus hainanus (Chinese bird spider)).